Reading from the N-terminus, the 314-residue chain is Methionyl-tRNA formyltransferase (314 aa).

(6S)-5,6,7,8-tetrahydrofolate is bound at residue 110 to 113 (SLLP).

It belongs to the Fmt family.

The catalysed reaction is L-methionyl-tRNA(fMet) + (6R)-10-formyltetrahydrofolate = N-formyl-L-methionyl-tRNA(fMet) + (6S)-5,6,7,8-tetrahydrofolate + H(+). Functionally, attaches a formyl group to the free amino group of methionyl-tRNA(fMet). The formyl group appears to play a dual role in the initiator identity of N-formylmethionyl-tRNA by promoting its recognition by IF2 and preventing the misappropriation of this tRNA by the elongation apparatus. This chain is Methionyl-tRNA formyltransferase, found in Bacillus mycoides (strain KBAB4) (Bacillus weihenstephanensis).